Consider the following 512-residue polypeptide: Centrosomal protein CCDC61 (512 aa).

N-acetylmethionine is present on Met-1. A head domain region spans residues Met-1 to Pro-143. Coiled-coil stretches lie at residues Ile-178–Glu-205 and Cys-248–Glu-275. The disordered stretch occupies residues Leu-276–Val-477. The residue at position 285 (Thr-285) is a Phosphothreonine. Positions Thr-293–Ala-306 are enriched in basic and acidic residues. Phosphoserine occurs at positions 334, 336, 373, and 376. The span at Arg-407–Ser-425 shows a compositional bias: low complexity. Phosphoserine occurs at positions 447 and 473.

This sequence belongs to the CCDC61 family. As to quaternary structure, forms homodimers (via head domain). Interacts with CEP170. Interacts with PCM1 and CEP131. Binds tubulin.

It is found in the cytoplasm. The protein localises to the cytoskeleton. The protein resides in the microtubule organizing center. It localises to the centrosome. Its subcellular location is the centriolar satellite. It is found in the cilium basal body. Microtubule-binding centrosomal protein required for centriole cohesion, independently of the centrosome-associated protein/CEP250 and rootletin/CROCC linker. In interphase, required for anchoring microtubule at the mother centriole subdistal appendages and for centrosome positioning. During mitosis, may be involved in spindle assembly and chromatin alignment by regulating the organization of spindle microtubules into a symmetrical structure. Has been proposed to play a role in CEP170 recruitment to centrosomes. However, this function could not be confirmed. Plays a non-essential role in ciliogenesis. In Homo sapiens (Human), this protein is Centrosomal protein CCDC61.